Here is an 82-residue protein sequence, read N- to C-terminus: Small ribosomal subunit protein bS16c (82 aa).

Belongs to the bacterial ribosomal protein bS16 family.

It is found in the plastid. The protein localises to the chloroplast. The chain is Small ribosomal subunit protein bS16c from Pyropia yezoensis (Susabi-nori).